Here is a 319-residue protein sequence, read N- to C-terminus: Acetyl-coenzyme A carboxylase carboxyl transferase subunit beta, chloroplastic (319 aa).

A CoA carboxyltransferase N-terminal domain is found at 47-319 (LWVQCDNCES…ELFYVLQSSS (273 aa)). Zn(2+) contacts are provided by Cys51, Cys54, Cys70, and Cys73. Residues 51–73 (CDNCESLLYIRFLRENKSVCEEC) form a C4-type zinc finger.

It belongs to the AccD/PCCB family. As to quaternary structure, acetyl-CoA carboxylase is a heterohexamer composed of biotin carboxyl carrier protein, biotin carboxylase and 2 subunits each of ACCase subunit alpha and ACCase plastid-coded subunit beta (accD). Zn(2+) is required as a cofactor.

Its subcellular location is the plastid. It localises to the chloroplast stroma. The enzyme catalyses N(6)-carboxybiotinyl-L-lysyl-[protein] + acetyl-CoA = N(6)-biotinyl-L-lysyl-[protein] + malonyl-CoA. The protein operates within lipid metabolism; malonyl-CoA biosynthesis; malonyl-CoA from acetyl-CoA: step 1/1. Functionally, component of the acetyl coenzyme A carboxylase (ACC) complex. Biotin carboxylase (BC) catalyzes the carboxylation of biotin on its carrier protein (BCCP) and then the CO(2) group is transferred by the transcarboxylase to acetyl-CoA to form malonyl-CoA. The sequence is that of Acetyl-coenzyme A carboxylase carboxyl transferase subunit beta, chloroplastic from Picea abies (Norway spruce).